The following is a 238-amino-acid chain: Sugar fermentation stimulation protein homolog (238 aa).

Belongs to the SfsA family.

The polypeptide is Sugar fermentation stimulation protein homolog (Haemophilus influenzae (strain ATCC 51907 / DSM 11121 / KW20 / Rd)).